The sequence spans 151 residues: UPF0178 protein CJA_1978 (151 aa).

It belongs to the UPF0178 family.

This Cellvibrio japonicus (strain Ueda107) (Pseudomonas fluorescens subsp. cellulosa) protein is UPF0178 protein CJA_1978.